The primary structure comprises 500 residues: MTIFNNYEVWFVIGSQHLYGPEALRQVTQHAEHVVNALNAEAKLPCKLVLKPLGTTPDEITHICRDANYDDKCAGMVVWLHTFSPAKMWINGLTILNKPLLQFHTQFNASLPWDSIDMDFMNLNQTAHGGREFGFIGARMRQQHAVVTGHWQDSQAQKRIGSWMRQAVSKQDTRHLKVVRFGDNMREVAVTDGDKVAAQIKFGFSVNTWAVGDLVQVVNEISDGDVSALVDEYESSYRLTAAAQIKGDKRQNVLDAARIELGMKRFLEQGGFHAFTTTFEDLHGLKQLPGLAVQRLMQQGYGFAGEGDWKTAALLRIMKVMSTGLQGGTSFMEDYTYHFENGNDLVLGSHMLEVCPSIAVEEKPILDVQYLGIGGKADPARLIFNTRTGPAINASLIDLGDRFRLLVNCVDTVETPHSLPKLPVANALWKAQPDLPTASEAWIVAGGAHHTVFSHSLDLNDMRQFAELHDIELTVIDNDTRLPAFKDALRWNEVYYGSKR.

The Mn(2+) site is built by Glu-306, Glu-333, His-350, and His-450.

The protein belongs to the arabinose isomerase family. Homohexamer. Mn(2+) is required as a cofactor.

The catalysed reaction is beta-L-arabinopyranose = L-ribulose. It participates in carbohydrate degradation; L-arabinose degradation via L-ribulose; D-xylulose 5-phosphate from L-arabinose (bacterial route): step 1/3. Its function is as follows. Catalyzes the conversion of L-arabinose to L-ribulose. The chain is L-arabinose isomerase from Enterobacter sp. (strain 638).